Consider the following 549-residue polypeptide: Glutamyl-tRNA(Gln) amidotransferase subunit B, chloroplastic/mitochondrial (549 aa).

The protein belongs to the GatB/GatE family. GatB subfamily. As to quaternary structure, subunit of the heterotrimeric GatCAB amidotransferase (AdT) complex, composed of A, B and C subunits.

Its subcellular location is the mitochondrion. The protein resides in the plastid. It localises to the chloroplast. It carries out the reaction L-glutamyl-tRNA(Gln) + L-glutamine + ATP + H2O = L-glutaminyl-tRNA(Gln) + L-glutamate + ADP + phosphate + H(+). Its function is as follows. Allows the formation of correctly charged Gln-tRNA(Gln) through the transamidation of misacylated Glu-tRNA(Gln) in chloroplasts and mitochondria. The reaction takes place in the presence of glutamine and ATP through an activated gamma-phospho-Glu-tRNA(Gln). The polypeptide is Glutamyl-tRNA(Gln) amidotransferase subunit B, chloroplastic/mitochondrial (Ricinus communis (Castor bean)).